The primary structure comprises 20 residues: T cell receptor alpha joining 42 (20 aa).

A disordered region spans residues Tyr-1–Pro-20.

In terms of assembly, alpha-beta TR is a heterodimer composed of an alpha and beta chain; disulfide-linked. The alpha-beta TR is associated with the transmembrane signaling CD3 coreceptor proteins to form the TR-CD3 (TcR or TCR). The assembly of alpha-beta TR heterodimers with CD3 occurs in the endoplasmic reticulum where a single alpha-beta TR heterodimer associates with one CD3D-CD3E heterodimer, one CD3G-CD3E heterodimer and one CD247 homodimer forming a stable octameric structure. CD3D-CD3E and CD3G-CD3E heterodimers preferentially associate with TR alpha and TR beta chains, respectively. The association of the CD247 homodimer is the last step of TcR assembly in the endoplasmic reticulum and is required for transport to the cell surface.

Its subcellular location is the cell membrane. In terms of biological role, j region of the variable domain of T cell receptor (TR) alpha chain that participates in the antigen recognition. Alpha-beta T cell receptors are antigen specific receptors which are essential to the immune response and are present on the cell surface of T lymphocytes. Recognize peptide-major histocompatibility (MH) (pMH) complexes that are displayed by antigen presenting cells (APC), a prerequisite for efficient T cell adaptive immunity against pathogens. Binding of alpha-beta TR to pMH complex initiates TR-CD3 clustering on the cell surface and intracellular activation of LCK that phosphorylates the ITAM motifs of CD3G, CD3D, CD3E and CD247 enabling the recruitment of ZAP70. In turn, ZAP70 phosphorylates LAT, which recruits numerous signaling molecules to form the LAT signalosome. The LAT signalosome propagates signal branching to three major signaling pathways, the calcium, the mitogen-activated protein kinase (MAPK) kinase and the nuclear factor NF-kappa-B (NF-kB) pathways, leading to the mobilization of transcription factors that are critical for gene expression and essential for T cell growth and differentiation. The T cell repertoire is generated in the thymus, by V-(D)-J rearrangement. This repertoire is then shaped by intrathymic selection events to generate a peripheral T cell pool of self-MH restricted, non-autoaggressive T cells. Post-thymic interaction of alpha-beta TR with the pMH complexes shapes TR structural and functional avidity. This is T cell receptor alpha joining 42 from Homo sapiens (Human).